A 519-amino-acid chain; its full sequence is Threonine synthase, chloroplastic (519 aa).

Residues 1–40 constitute a chloroplast transit peptide; the sequence is MAASCMLRSSFISPGLPQLHHQSTSKPNNGIHFFTPIKAT. Lysine 196 carries the N6-(pyridoxal phosphate)lysine modification. Pyridoxal 5'-phosphate is bound by residues 328 to 332 and threonine 465; that span reads GNLGN.

The protein belongs to the threonine synthase family. Homodimer. Requires pyridoxal 5'-phosphate as cofactor.

The protein localises to the plastid. It is found in the chloroplast. The enzyme catalyses O-phospho-L-homoserine + H2O = L-threonine + phosphate. Its pathway is amino-acid biosynthesis; L-threonine biosynthesis; L-threonine from L-aspartate: step 5/5. Allosterically activated by S-adenosyl-methionine (SAM). In terms of biological role, catalyzes the gamma-elimination of phosphate from L-phosphohomoserine and the beta-addition of water to produce L-threonine. This is Threonine synthase, chloroplastic from Solanum tuberosum (Potato).